Reading from the N-terminus, the 499-residue chain is Lysosomal Pro-X carboxypeptidase (499 aa).

Positions 1–21 (MGRCSLLLLLLLIAFLTPGAA) are cleaved as a signal peptide. The propeptide occupies 22 to 47 (NPVSPSLRAPSSLPWSTSFRSRPTIT). N103 carries N-linked (GlcNAc...) asparagine glycosylation. Residue S181 is the Charge relay system of the active site. The segment at 196–337 (HLVVGALASS…QNIFQALNVY (142 aa)) is SKS domain. 4 disulfides stabilise this stretch: C217–C375, C235–C313, C266–C346, and C367–C397. N234 is a glycosylation site (N-linked (GlcNAc...) asparagine). 2 N-linked (GlcNAc...) asparagine glycosylation sites follow: N339 and N348. N418 carries N-linked (GlcNAc...) asparagine glycosylation. Active-site charge relay system residues include D433 and H458.

It belongs to the peptidase S28 family. Homodimer.

The protein localises to the lysosome. It catalyses the reaction Cleavage of a -Pro-|-Xaa bond to release a C-terminal amino acid.. Functionally, cleaves C-terminal amino acids linked to proline in peptides such as angiotensin II, III and des-Arg9-bradykinin. This cleavage occurs at acidic pH, but enzymatic activity is retained with some substrates at neutral pH. The sequence is that of Lysosomal Pro-X carboxypeptidase (PRCP) from Bos taurus (Bovine).